Reading from the N-terminus, the 738-residue chain is Prolyl oligopeptidase A (738 aa).

Catalysis depends on charge relay system residues serine 581, aspartate 665, and histidine 701.

Belongs to the peptidase S9A family. As to quaternary structure, monomer.

It catalyses the reaction Hydrolysis of Pro-|-Xaa &gt;&gt; Ala-|-Xaa in oligopeptides.. Housekeeping prolyl oligopeptidase (POP) that behaves like a conventional POP by cleaving peptide bonds on the C-terminal side of prolyl residues within peptides that are up to approximately 30 amino acids long. This is Prolyl oligopeptidase A from Galerina marginata (strain CBS 339.88).